Consider the following 71-residue polypeptide: Large ribosomal subunit protein bL31 (71 aa).

Zn(2+)-binding residues include C16, C18, C37, and C40.

Belongs to the bacterial ribosomal protein bL31 family. Type A subfamily. Part of the 50S ribosomal subunit. Zn(2+) is required as a cofactor.

Its function is as follows. Binds the 23S rRNA. The protein is Large ribosomal subunit protein bL31 of Pseudoalteromonas translucida (strain TAC 125).